The following is a 117-amino-acid chain: Hainantoxin-XV-2 (117 aa).

Residues 1–20 form the signal peptide; the sequence is MKLCAVIIASLLVCVAVASS. Residues 20–55 are disordered; that stretch reads SSDNQKEFAQEKEMTREETQSLGEHEKDDEVTGSEE. The propeptide occupies 21-56; sequence SDNQKEFAQEKEMTREETQSLGEHEKDDEVTGSEER. Residues 23–55 are compositionally biased toward basic and acidic residues; that stretch reads NQKEFAQEKEMTREETQSLGEHEKDDEVTGSEE. 4 disulfides stabilise this stretch: Cys-58/Cys-72, Cys-65/Cys-78, Cys-69/Cys-115, and Cys-71/Cys-91.

It belongs to the neurotoxin 03 (Tx2) family. 02 subfamily. HNTX-XV sub-subfamily. Expressed by the venom gland.

It is found in the secreted. In terms of biological role, putative ion channel inhibitor. This is Hainantoxin-XV-2 from Cyriopagopus hainanus (Chinese bird spider).